We begin with the raw amino-acid sequence, 377 residues long: Transcription factor ast-1 (377 aa).

The segment at 72 to 143 is disordered; it reads PNRMLYNDNT…SNGSSSSTES (72 aa). 2 stretches are compositionally biased toward low complexity: residues 96–109 and 118–142; these read STSA…TSSK and TESS…SSTE. Positions 214-294 form a DNA-binding region, ETS; that stretch reads TQLWQFLLEL…HGKRYAYKFD (81 aa).

The protein belongs to the ETS family. As to expression, expressed in the A-neurons in the male-specific genital sensilla (simple sense organs) known as rays.

The protein resides in the nucleus. It is found in the cell projection. It localises to the neuron projection. Functionally, transcription factor. Probably binds to DNA sequences containing the consensus motif 5'-CGGA[AT][AG]-3'. Positively modulates expression of dopamine pathway genes, acting as a terminal selector for differentiation of dopaminergic neurons; may act in concert with homeobox proteins ceh-40, ceh-43 and ceh-20. Required for axon navigation in some interneurons, perhaps acting in the same pathways as basement membrane protein nid-1 and unc-6/netrin. Plays a role in the differentiation of the ventral cord pioneer neuron AVG. Required for morphogenesis of the pharynx. The protein is Transcription factor ast-1 of Caenorhabditis elegans.